We begin with the raw amino-acid sequence, 286 residues long: tRNA (guanine-N(7)-)-methyltransferase (286 aa).

Phosphoserine occurs at positions 7 and 59. Residues glycine 103, 126–127 (EI), 161–162 (NA), and cysteine 181 each bind S-adenosyl-L-methionine. Aspartate 184 is a catalytic residue. 259–261 (TEE) is a binding site for S-adenosyl-L-methionine.

Belongs to the class I-like SAM-binding methyltransferase superfamily. TrmB family. Forms a complex with TRM82.

Its subcellular location is the nucleus. The catalysed reaction is guanosine(46) in tRNA + S-adenosyl-L-methionine = N(7)-methylguanosine(46) in tRNA + S-adenosyl-L-homocysteine. Its pathway is tRNA modification; N(7)-methylguanine-tRNA biosynthesis. In terms of biological role, methyltransferase that catalyzes the formation of N(7)-methylguanine at position 46 (m7G46) in tRNA, a modification required to maintain stability of tRNAs; its absence resulting in tRNA decay. Both the D-stem and T-stem structures of tRNAs are required for efficient methyltransferase activity. This Saccharomyces cerevisiae (strain YJM789) (Baker's yeast) protein is tRNA (guanine-N(7)-)-methyltransferase.